Here is a 79-residue protein sequence, read N- to C-terminus: Small ribosomal subunit protein bS18 (79 aa).

Belongs to the bacterial ribosomal protein bS18 family. Part of the 30S ribosomal subunit. Forms a tight heterodimer with protein bS6.

Functionally, binds as a heterodimer with protein bS6 to the central domain of the 16S rRNA, where it helps stabilize the platform of the 30S subunit. The chain is Small ribosomal subunit protein bS18 from Listeria innocua serovar 6a (strain ATCC BAA-680 / CLIP 11262).